The primary structure comprises 333 residues: Holliday junction branch migration complex subunit RuvB (333 aa).

A large ATPase domain (RuvB-L) region spans residues 1–182; the sequence is MDERLLSGES…FGVLSRLEYY (182 aa). ATP contacts are provided by residues L21, R22, G63, K66, T67, T68, 129 to 131, R172, Y182, and R219; that span reads EDF. Residue T67 participates in Mg(2+) binding. Positions 183–253 are small ATPAse domain (RuvB-S); sequence TVDQLSAIVE…ITQMALELLQ (71 aa). The tract at residues 256 to 333 is head domain (RuvB-H); it reads KLGLDHIDHK…QHFGMEMPKI (78 aa). DNA-binding residues include R311 and R316.

This sequence belongs to the RuvB family. In terms of assembly, homohexamer. Forms an RuvA(8)-RuvB(12)-Holliday junction (HJ) complex. HJ DNA is sandwiched between 2 RuvA tetramers; dsDNA enters through RuvA and exits via RuvB. An RuvB hexamer assembles on each DNA strand where it exits the tetramer. Each RuvB hexamer is contacted by two RuvA subunits (via domain III) on 2 adjacent RuvB subunits; this complex drives branch migration. In the full resolvosome a probable DNA-RuvA(4)-RuvB(12)-RuvC(2) complex forms which resolves the HJ.

It localises to the cytoplasm. It catalyses the reaction ATP + H2O = ADP + phosphate + H(+). Its function is as follows. The RuvA-RuvB-RuvC complex processes Holliday junction (HJ) DNA during genetic recombination and DNA repair, while the RuvA-RuvB complex plays an important role in the rescue of blocked DNA replication forks via replication fork reversal (RFR). RuvA specifically binds to HJ cruciform DNA, conferring on it an open structure. The RuvB hexamer acts as an ATP-dependent pump, pulling dsDNA into and through the RuvAB complex. RuvB forms 2 homohexamers on either side of HJ DNA bound by 1 or 2 RuvA tetramers; 4 subunits per hexamer contact DNA at a time. Coordinated motions by a converter formed by DNA-disengaged RuvB subunits stimulates ATP hydrolysis and nucleotide exchange. Immobilization of the converter enables RuvB to convert the ATP-contained energy into a lever motion, pulling 2 nucleotides of DNA out of the RuvA tetramer per ATP hydrolyzed, thus driving DNA branch migration. The RuvB motors rotate together with the DNA substrate, which together with the progressing nucleotide cycle form the mechanistic basis for DNA recombination by continuous HJ branch migration. Branch migration allows RuvC to scan DNA until it finds its consensus sequence, where it cleaves and resolves cruciform DNA. The polypeptide is Holliday junction branch migration complex subunit RuvB (Bacillus cytotoxicus (strain DSM 22905 / CIP 110041 / 391-98 / NVH 391-98)).